The chain runs to 283 residues: Pantothenate synthetase (283 aa).

30–37 (MGNLHLGH) lines the ATP pocket. The active-site Proton donor is H37. Q61 is a binding site for (R)-pantoate. Q61 contributes to the beta-alanine binding site. 149–152 (GQKD) contacts ATP. Residue Q155 coordinates (R)-pantoate. ATP contacts are provided by residues I178 and 186 to 189 (MSSR).

This sequence belongs to the pantothenate synthetase family. As to quaternary structure, homodimer.

The protein localises to the cytoplasm. The enzyme catalyses (R)-pantoate + beta-alanine + ATP = (R)-pantothenate + AMP + diphosphate + H(+). It participates in cofactor biosynthesis; (R)-pantothenate biosynthesis; (R)-pantothenate from (R)-pantoate and beta-alanine: step 1/1. Functionally, catalyzes the condensation of pantoate with beta-alanine in an ATP-dependent reaction via a pantoyl-adenylate intermediate. The protein is Pantothenate synthetase of Shewanella halifaxensis (strain HAW-EB4).